Consider the following 283-residue polypeptide: Large ribosomal subunit protein uL2 (283 aa).

Disordered stretches follow at residues 37 to 59 and 219 to 283; these read AKKKKNSGRNNQGKITVRHRGGG and HKGI…RNSK. Over residues 256-269 the composition is skewed to basic residues; that stretch reads WGKRHMGVKTRNNK.

The protein belongs to the universal ribosomal protein uL2 family. As to quaternary structure, part of the 50S ribosomal subunit. Forms a bridge to the 30S subunit in the 70S ribosome.

In terms of biological role, one of the primary rRNA binding proteins. Required for association of the 30S and 50S subunits to form the 70S ribosome, for tRNA binding and peptide bond formation. It has been suggested to have peptidyltransferase activity; this is somewhat controversial. Makes several contacts with the 16S rRNA in the 70S ribosome. The polypeptide is Large ribosomal subunit protein uL2 (Mycoplasmoides gallisepticum (strain R(low / passage 15 / clone 2)) (Mycoplasma gallisepticum)).